We begin with the raw amino-acid sequence, 119 residues long: Ribonuclease P protein component (119 aa).

This sequence belongs to the RnpA family. As to quaternary structure, consists of a catalytic RNA component (M1 or rnpB) and a protein subunit.

It carries out the reaction Endonucleolytic cleavage of RNA, removing 5'-extranucleotides from tRNA precursor.. RNaseP catalyzes the removal of the 5'-leader sequence from pre-tRNA to produce the mature 5'-terminus. It can also cleave other RNA substrates such as 4.5S RNA. The protein component plays an auxiliary but essential role in vivo by binding to the 5'-leader sequence and broadening the substrate specificity of the ribozyme. This Syntrophus aciditrophicus (strain SB) protein is Ribonuclease P protein component.